The sequence spans 210 residues: Probable nicotinate-nucleotide adenylyltransferase (210 aa).

The protein belongs to the NadD family.

It catalyses the reaction nicotinate beta-D-ribonucleotide + ATP + H(+) = deamido-NAD(+) + diphosphate. It participates in cofactor biosynthesis; NAD(+) biosynthesis; deamido-NAD(+) from nicotinate D-ribonucleotide: step 1/1. In terms of biological role, catalyzes the reversible adenylation of nicotinate mononucleotide (NaMN) to nicotinic acid adenine dinucleotide (NaAD). The protein is Probable nicotinate-nucleotide adenylyltransferase of Streptococcus pyogenes serotype M18 (strain MGAS8232).